A 932-amino-acid chain; its full sequence is RNA-binding protein 12 (932 aa).

The interval 96-116 (DIPPANASRSGPPPSSGMSSR) is disordered. Residues 98 to 116 (PPANASRSGPPPSSGMSSR) are compositionally biased toward low complexity. Positions 304-379 (LYVSVHGMPF…RYVEVSPATE (76 aa)) constitute an RRM 1 domain. Residues Ser-352 and Ser-375 each carry the phosphoserine modification. Composition is skewed to polar residues over residues 392–401 (KQNMGPSGQT) and 408–417 (LPRSKSPSGQ). Residues 392–424 (KQNMGPSGQTHPPPQTLPRSKSPSGQKRSRSRS) are disordered. Phosphoserine is present on residues Ser-420, Ser-422, and Ser-424. The region spanning 430 to 507 (FCVYLKGLPF…RFIQVHPITK (78 aa)) is the RRM 2 domain. Residue Ser-525 is modified to Phosphoserine. The span at 717–734 (NGPPFNFPGNFGGSNAFG) shows a compositional bias: low complexity. Residues 717-853 (NGPPFNFPGN…PGFASSSGKP (137 aa)) form a disordered region. Residues 783 to 811 (SGFGGGPQNFGNGPGSLGGPPGFGSGPPG) are compositionally biased toward gly residues. The span at 824–836 (AFGPGPGPGPGPG) shows a compositional bias: pro residues. The RRM 3 domain maps to 856–932 (TVIKVQNMPF…GSRKVKLVLG (77 aa)).

The protein localises to the nucleus. The chain is RNA-binding protein 12 (RBM12) from Homo sapiens (Human).